The primary structure comprises 383 residues: Oxysterol-binding protein-related protein 4B (383 aa).

It belongs to the OSBP family. Expressed in stems and flowers.

May be involved in the transport of sterols. This chain is Oxysterol-binding protein-related protein 4B (ORP4B), found in Arabidopsis thaliana (Mouse-ear cress).